Consider the following 506-residue polypeptide: Maturase K (506 aa).

This sequence belongs to the intron maturase 2 family. MatK subfamily.

It localises to the plastid. The protein resides in the chloroplast. In terms of biological role, usually encoded in the trnK tRNA gene intron. Probably assists in splicing its own and other chloroplast group II introns. This Jurinea cyanoides protein is Maturase K.